Here is a 202-residue protein sequence, read N- to C-terminus: ATP-dependent Clp protease proteolytic subunit (202 aa).

The active-site Nucleophile is Ser-98. His-123 is an active-site residue.

It belongs to the peptidase S14 family. In terms of assembly, fourteen ClpP subunits assemble into 2 heptameric rings which stack back to back to give a disk-like structure with a central cavity, resembling the structure of eukaryotic proteasomes.

Its subcellular location is the cytoplasm. It catalyses the reaction Hydrolysis of proteins to small peptides in the presence of ATP and magnesium. alpha-casein is the usual test substrate. In the absence of ATP, only oligopeptides shorter than five residues are hydrolyzed (such as succinyl-Leu-Tyr-|-NHMec, and Leu-Tyr-Leu-|-Tyr-Trp, in which cleavage of the -Tyr-|-Leu- and -Tyr-|-Trp bonds also occurs).. Functionally, cleaves peptides in various proteins in a process that requires ATP hydrolysis. Has a chymotrypsin-like activity. Plays a major role in the degradation of misfolded proteins. This is ATP-dependent Clp protease proteolytic subunit from Magnetococcus marinus (strain ATCC BAA-1437 / JCM 17883 / MC-1).